A 469-amino-acid polypeptide reads, in one-letter code: Probable lysophospholipase BODYGUARD 1 (469 aa).

An N-terminal signal peptide occupies residues Met-1–Tyr-45. Cys-46 carries N-palmitoyl cysteine lipidation. Positions Val-185–Ile-439 constitute an AB hydrolase-1 domain. His-189 is a catalytic residue. The active-site Nucleophile is the Ser-263. Catalysis depends on charge relay system residues Asp-410 and His-438.

As to expression, expressed exclusively in protodermal and epidermal cells of all organs, especially on adaxial sides.

It is found in the cell membrane. The protein localises to the secreted. It localises to the cell wall. Controls cuticle development and morphogenesis, by promoting cutin and suberin monomers loading. Involved in the regulation of abscissic acid (ABA) biosynthesis in response to osmotic stress. Plays an important role in osmotic stress and drought resistance. Required to ensure a reduced permeability of aerial tissue, thus preventing transpiration. Regulates lateral root hair development. Functionally, required for infection by the pathogenic necrotrophic fungus Botrytis cinerea, probably by regulating structural traits of the cuticle. The sequence is that of Probable lysophospholipase BODYGUARD 1 from Arabidopsis thaliana (Mouse-ear cress).